A 419-amino-acid chain; its full sequence is eIF5-mimic protein 1 (419 aa).

The disordered stretch occupies residues 1 to 22 (MNKHQKPVLTGQRFKTRKRDEK). The residue at position 117 (Lys-117) is an N6-acetyllysine. Residues 248-415 (VQQSLGTRKE…QNAEEESESE (168 aa)) form the W2 domain. Residues Ser-412 and Ser-414 each carry the phosphoserine modification.

Belongs to the BZW family. As to quaternary structure, interacts with EIF3E. Interacts with EIF2S2. Interacts with EIF3C.

It localises to the cytoplasm. Functionally, translation initiation regulator which represses non-AUG initiated translation and repeat-associated non-AUG (RAN) initiated translation by acting as a competitive inhibitor of eukaryotic translation initiation factor 5 (EIF5) function. Increases the accuracy of translation initiation by impeding EIF5-dependent translation from non-AUG codons by competing with it for interaction with EIF2S2 within the 43S pre-initiation complex (PIC) in an EIF3C-binding dependent manner. The sequence is that of eIF5-mimic protein 1 (BZW2) from Homo sapiens (Human).